Consider the following 128-residue polypeptide: Keratin-associated protein 2-3 (128 aa).

The segment at 5 to 112 (CCGSTLSSLS…SVQSPCCRPP (108 aa)) is 10 X 5 AA repeats of C-C-[CDPQRWG]-[APRS]-[CIPSTVD].

It belongs to the KRTAP type 2 family. In terms of assembly, interacts with hair keratins.

In terms of biological role, in the hair cortex, hair keratin intermediate filaments are embedded in an interfilamentous matrix, consisting of hair keratin-associated proteins (KRTAP), which are essential for the formation of a rigid and resistant hair shaft through their extensive disulfide bond cross-linking with abundant cysteine residues of hair keratins. The matrix proteins include the high-sulfur and high-glycine-tyrosine keratins. This chain is Keratin-associated protein 2-3 (KRTAP2-3), found in Homo sapiens (Human).